The sequence spans 122 residues: Small ribosomal subunit protein uS12c (122 aa).

Belongs to the universal ribosomal protein uS12 family. In terms of assembly, part of the 30S ribosomal subunit.

Its subcellular location is the plastid. It localises to the chloroplast. Functionally, with S4 and S5 plays an important role in translational accuracy. Located at the interface of the 30S and 50S subunits. This Chloranthus spicatus (Chulantree) protein is Small ribosomal subunit protein uS12c (rps12).